A 603-amino-acid chain; its full sequence is Elongation factor 4 (603 aa).

The tr-type G domain maps to 7–189 (SRIRNFCIIA…SIVHLVPPPS (183 aa)). Residues 19–24 (DHGKST) and 136–139 (NKID) each bind GTP.

It belongs to the TRAFAC class translation factor GTPase superfamily. Classic translation factor GTPase family. LepA subfamily.

It is found in the cell inner membrane. The enzyme catalyses GTP + H2O = GDP + phosphate + H(+). Functionally, required for accurate and efficient protein synthesis under certain stress conditions. May act as a fidelity factor of the translation reaction, by catalyzing a one-codon backward translocation of tRNAs on improperly translocated ribosomes. Back-translocation proceeds from a post-translocation (POST) complex to a pre-translocation (PRE) complex, thus giving elongation factor G a second chance to translocate the tRNAs correctly. Binds to ribosomes in a GTP-dependent manner. This is Elongation factor 4 from Crocosphaera subtropica (strain ATCC 51142 / BH68) (Cyanothece sp. (strain ATCC 51142)).